Consider the following 345-residue polypeptide: Platelet-derived growth factor C (345 aa).

The N-terminal stretch at 1–22 (MSLFGLLLLTSALAGQRQGTQA) is a signal peptide. 2 N-linked (GlcNAc...) asparagine glycosylation sites follow: N25 and N55. The CUB domain maps to 46 to 163 (HERIITVSTN…PGFCIHYNIV (118 aa)). Intrachain disulfides connect C104–C124, C250–C294, C280–C335, and C287–C337.

This sequence belongs to the PDGF/VEGF growth factor family. Homodimer; disulfide-linked. Interacts with PDGFRA homodimers, and with heterodimers formed by PDGFRA and PDGFRB. Interacts (via CUB domain) with PLAT (via kringle domain). Post-translationally, proteolytic removal of the N-terminal CUB domain releasing the core domain is necessary for unmasking the receptor-binding epitopes of the core domain. Cleavage after basic residues in the hinge region (region connecting the CUB and growth factor domains) gives rise to the receptor-binding form. Cleaved by PLAT and PLG. In terms of processing, sumoylated with SUMO1. N-glycosylated. As to expression, expressed in the fallopian tube, vascular smooth muscle cells in kidney, breast and colon and in visceral smooth muscle of the gastrointestinal tract. Highly expressed in retinal pigment epithelia. Expressed in medulloblastoma. In the kidney, constitutively expressed in parietal epithelial cells of Bowman's capsule, tubular epithelial cells and in arterial endothelial cells (at protein level). Highly expressed in the platelets, prostate, testis and uterus. Higher expression is observed in uterine leiomyomata. Weaker expression in the spleen, thymus, heart, pancreas, liver, ovary cells and small intestine, and negligible expression in the colon and peripheral blood leukocytes.

It is found in the cytoplasm. Its subcellular location is the cytosol. The protein resides in the secreted. The protein localises to the nucleus. It localises to the cytoplasmic granule. It is found in the cell membrane. Growth factor that plays an essential role in the regulation of embryonic development, cell proliferation, cell migration, survival and chemotaxis. Potent mitogen and chemoattractant for cells of mesenchymal origin. Required for normal skeleton formation during embryonic development, especially for normal development of the craniofacial skeleton and for normal development of the palate. Required for normal skin morphogenesis during embryonic development. Plays an important role in wound healing, where it appears to be involved in three stages: inflammation, proliferation and remodeling. Plays an important role in angiogenesis and blood vessel development. Involved in fibrotic processes, in which transformation of interstitial fibroblasts into myofibroblasts plus collagen deposition occurs. The CUB domain has mitogenic activity in coronary artery smooth muscle cells, suggesting a role beyond the maintenance of the latency of the PDGF domain. In the nucleus, PDGFC seems to have additional function. The protein is Platelet-derived growth factor C (PDGFC) of Homo sapiens (Human).